The sequence spans 74 residues: Cytochrome c oxidase copper chaperone 1 (74 aa).

A disordered region spans residues 1 to 30 (MTDQPAQNGLIPPPTSEPSKAAASAETKPK). Residues Cys-34 and Cys-35 each contribute to the Cu cation site. Residues 34 to 74 (CCACPDTKKLRDECIVEHGESACTKWIEAHKICLRAEGFNV) enclose the CHCH domain. 2 short sequence motifs (cx9C motif) span residues 37–47 (CPDTKKLRDEC) and 56–66 (CTKWIEAHKIC). Cystine bridges form between Cys-37–Cys-66 and Cys-47–Cys-56.

Belongs to the COX17 family.

The protein localises to the mitochondrion intermembrane space. Its function is as follows. Copper chaperone for cytochrome c oxidase (COX). Binds 2 copper ions and delivers them to the Cu(A) site of COX. Can complement the yeast mutant cox17. This Arabidopsis thaliana (Mouse-ear cress) protein is Cytochrome c oxidase copper chaperone 1 (COX17-1).